A 211-amino-acid chain; its full sequence is Protein-L-isoaspartate O-methyltransferase (211 aa).

The active site involves Ser60.

It belongs to the methyltransferase superfamily. L-isoaspartyl/D-aspartyl protein methyltransferase family.

The protein resides in the cytoplasm. The catalysed reaction is [protein]-L-isoaspartate + S-adenosyl-L-methionine = [protein]-L-isoaspartate alpha-methyl ester + S-adenosyl-L-homocysteine. In terms of biological role, catalyzes the methyl esterification of L-isoaspartyl residues in peptides and proteins that result from spontaneous decomposition of normal L-aspartyl and L-asparaginyl residues. It plays a role in the repair and/or degradation of damaged proteins. This is Protein-L-isoaspartate O-methyltransferase from Pseudomonas syringae pv. tomato (strain ATCC BAA-871 / DC3000).